A 230-amino-acid polypeptide reads, in one-letter code: NAD(P)H-hydrate epimerase (230 aa).

The YjeF N-terminal domain occupies 11-218 (AIAVDQELFN…ALQRKYELNL (208 aa)). 61–65 (NNGGD) is a (6S)-NADPHX binding site. Positions 62 and 126 each coordinate K(+). Residues 130–136 (GFSFKPP) and Asp-159 each bind (6S)-NADPHX. Ser-162 contributes to the K(+) binding site.

It belongs to the NnrE/AIBP family. K(+) serves as cofactor.

The catalysed reaction is (6R)-NADHX = (6S)-NADHX. The enzyme catalyses (6R)-NADPHX = (6S)-NADPHX. In terms of biological role, catalyzes the epimerization of the S- and R-forms of NAD(P)HX, a damaged form of NAD(P)H that is a result of enzymatic or heat-dependent hydration. This is a prerequisite for the S-specific NAD(P)H-hydrate dehydratase to allow the repair of both epimers of NAD(P)HX. The protein is NAD(P)H-hydrate epimerase of Drosophila melanogaster (Fruit fly).